The chain runs to 155 residues: SsrA-binding protein (155 aa).

The protein belongs to the SmpB family.

The protein localises to the cytoplasm. Functionally, required for rescue of stalled ribosomes mediated by trans-translation. Binds to transfer-messenger RNA (tmRNA), required for stable association of tmRNA with ribosomes. tmRNA and SmpB together mimic tRNA shape, replacing the anticodon stem-loop with SmpB. tmRNA is encoded by the ssrA gene; the 2 termini fold to resemble tRNA(Ala) and it encodes a 'tag peptide', a short internal open reading frame. During trans-translation Ala-aminoacylated tmRNA acts like a tRNA, entering the A-site of stalled ribosomes, displacing the stalled mRNA. The ribosome then switches to translate the ORF on the tmRNA; the nascent peptide is terminated with the 'tag peptide' encoded by the tmRNA and targeted for degradation. The ribosome is freed to recommence translation, which seems to be the essential function of trans-translation. This Bordetella bronchiseptica (strain ATCC BAA-588 / NCTC 13252 / RB50) (Alcaligenes bronchisepticus) protein is SsrA-binding protein.